The chain runs to 593 residues: Transmembrane 9 superfamily member 4 (593 aa).

The N-terminal stretch at 1 to 25 (MVLLPSMTSLLLVFLFLYGVSPVIS) is a signal peptide. The Lumenal segment spans residues 26–230 (DGSDHRYKVG…SMPHHLEIHW (205 aa)). Residues 231–251 (FSIINSCVTVLLLTGFLATIL) form a helical membrane-spanning segment. Residues 252 to 303 (MRVLKNDFVKYAHDEEAVDDQEETGWKLIHGDVFRFPKHKSLLAAALGSGTQ) lie on the Cytoplasmic side of the membrane. The helical transmembrane segment at 304 to 324 (LFTLAVFIFMLALVGVFYPYN) threads the bilayer. Residues 325-326 (RG) are Lumenal-facing. The helical transmembrane segment at 327 to 347 (ALFTALVVIYALTSGIAGYTA) threads the bilayer. Residues 348 to 366 (ASFYCQLEGTNWVRNVILT) lie on the Cytoplasmic side of the membrane. Residues 367–387 (GSLFCGPLLITFSFLNTVAIA) traverse the membrane as a helical segment. Residues 388–398 (YQATAALPFGT) lie on the Lumenal side of the membrane. A helical membrane pass occupies residues 399–419 (IVVIFLIWALVTSPLLILGGI). The Cytoplasmic portion of the chain corresponds to 420 to 453 (AGKNRKSEFQAPCRTTKYPREIPPMRWYRRTLPQ). A helical transmembrane segment spans residues 454–474 (MAMAGFLPFSAIYIELYYIFA). Topologically, residues 475 to 486 (SVWGHRIYTIYS) are lumenal. Residues 487 to 507 (ILSIVFLILVIVTAFITVALT) form a helical membrane-spanning segment. Residues 508–522 (YFQLAAEDHEWWWRS) lie on the Cytoplasmic side of the membrane. A helical transmembrane segment spans residues 523–543 (LLCGGSTGLFIYAYCLYYYYA). At 544–554 (RSDMSGFMQTS) the chain is on the lumenal side. A helical membrane pass occupies residues 555-575 (FFFGYMACICYGFFLMLGTIG). At 576-593 (FCASLLFVRHIYRSIKCE) the chain is on the cytoplasmic side. The Endoplasmic reticulum export signal motif lies at 582-587 (FVRHIY). Positions 591–593 (KCE) match the Golgi retention signal motif.

Belongs to the nonaspanin (TM9SF) (TC 9.A.2) family.

It localises to the endosome membrane. The protein resides in the golgi apparatus membrane. The protein is Transmembrane 9 superfamily member 4 of Arabidopsis thaliana (Mouse-ear cress).